The following is a 646-amino-acid chain: Galactofuranosyltransferase GlfT2 (646 aa).

UDP-alpha-D-galactofuranose contacts are provided by R182, Q211, N240, and D267. Residues D267 and D269 each coordinate Mn(2+). Catalysis depends on D384, which acts as the Proton acceptor. H408 serves as a coordination point for Mn(2+).

It belongs to the glycosyltransferase 2 family. As to quaternary structure, homotetramer. The cofactor is Mn(2+). Requires Mg(2+) as cofactor.

The protein resides in the cell membrane. It catalyses the reaction beta-D-galactofuranosyl-(1-&gt;5)-beta-D-galactofuranosyl-(1-&gt;4)-alpha-L-rhamnosyl-(1-&gt;3)-N-acetyl-alpha-D-glucosaminyl-diphospho-trans,octa-cis-decaprenol + 28 UDP-alpha-D-galactofuranose = [beta-D-galactofuranosyl-(1-&gt;5)-beta-D-galactofuranosyl-(1-&gt;6)]14-beta-D-galactofuranosyl-(1-&gt;5)-beta-D-galactofuranosyl-(1-&gt;4)-alpha-L-rhamnopyranosyl-(1-&gt;3)-N-acetyl-alpha-D-glucosaminyl-diphospho-trans,octa-cis-decaprenol + 28 UDP + 28 H(+). The protein operates within cell wall biogenesis; cell wall polysaccharide biosynthesis. Involved in the galactan polymerization of the arabinogalactan (AG) region of the mycolylarabinogalactan-peptidoglycan (mAGP) complex, an essential component of the mycobacteria cell wall. Thus, successively transfers approximately 28 galactofuranosyl (Galf) residues from UDP-galactofuranose (UDP-Galf) onto the galactofuranosyl-galactofuranosyl-rhamnosyl-GlcNAc-diphospho-decaprenol (Galf-Galf-Rha-GlcNAc-PP-C50) acceptor produced by GlfT1, with alternating 1-&gt;5 and 1-&gt;6 links, forming a galactan domain with approximately 30 galactofuranosyl residues. This chain is Galactofuranosyltransferase GlfT2, found in Mycolicibacterium smegmatis (strain ATCC 700084 / mc(2)155) (Mycobacterium smegmatis).